Consider the following 797-residue polypeptide: Ribosome biogenesis protein BOP1 homolog (797 aa).

2 disordered regions span residues Leu-22 to Pro-112 and Ser-149 to Val-177. Over residues Ala-61–Ala-73 the composition is skewed to low complexity. Positions Pro-74–Ala-87 are enriched in acidic residues. The span at Gly-90–Pro-112 shows a compositional bias: gly residues. 7 WD repeats span residues Gly-462–Thr-502, Val-504–Glu-544, Arg-581–Pro-623, Lys-626–Lys-664, Gly-667–Lys-706, Tyr-710–Thr-749, and Thr-766–Asn-797.

It belongs to the WD repeat BOP1/ERB1 family.

It localises to the nucleus. Its subcellular location is the nucleolus. The protein localises to the nucleoplasm. Its function is as follows. Required for maturation of ribosomal RNAs and formation of the large ribosomal subunit. The sequence is that of Ribosome biogenesis protein BOP1 homolog from Chlamydomonas reinhardtii (Chlamydomonas smithii).